The following is a 1269-amino-acid chain: DNA-directed RNA polymerase subunit beta (1269 aa).

This sequence belongs to the RNA polymerase beta chain family. In terms of assembly, the RNAP catalytic core consists of 2 alpha, 1 beta, 1 beta' and 1 omega subunit. When a sigma factor is associated with the core the holoenzyme is formed, which can initiate transcription.

It catalyses the reaction RNA(n) + a ribonucleoside 5'-triphosphate = RNA(n+1) + diphosphate. In terms of biological role, DNA-dependent RNA polymerase catalyzes the transcription of DNA into RNA using the four ribonucleoside triphosphates as substrates. The chain is DNA-directed RNA polymerase subunit beta from Porphyromonas gingivalis (strain ATCC BAA-308 / W83).